Reading from the N-terminus, the 269-residue chain is Phosphonoacetaldehyde hydrolase (269 aa).

The Nucleophile role is filled by Asp-10. The Mg(2+) site is built by Asp-10 and Ala-12. Residue Lys-52 is the Schiff-base intermediate with substrate of the active site. Asp-186 contacts Mg(2+).

Belongs to the HAD-like hydrolase superfamily. PhnX family. Homodimer. It depends on Mg(2+) as a cofactor.

The enzyme catalyses phosphonoacetaldehyde + H2O = acetaldehyde + phosphate + H(+). In terms of biological role, involved in phosphonate degradation. The protein is Phosphonoacetaldehyde hydrolase of Salmonella paratyphi A (strain ATCC 9150 / SARB42).